The following is a 238-amino-acid chain: MSVLIVTGTGTEVGKTVVTAALAALAADRGTAVAVVKPAQTGVRAGELGDVDLVRDLSGVDDVHELSRYADPLAPVSAARRAGLPTPDLGTVAVAVRRLQADRGLVLVEGAGGLLVRYDHDGSTLADLARTLAAPVLVVTTAGLGTLNATALTLEVMANRGLDLAGIVVGSWPVEPDLAARSNIVDLELLAARPLAGAVPAGAGLLGTGQFLQIARSSLEPALGGAFNAAEFRRRYAV.

Residue 12–17 participates in ATP binding; the sequence is EVGKTV. Residue Thr-16 coordinates Mg(2+). The active site involves Lys-37. Thr-41 is a binding site for substrate. Residues Asp-50, 109–112, 170–171, and 200–202 each bind ATP; these read EGAG, GS, and PAG. Residues Asp-50 and Glu-109 each contribute to the Mg(2+) site.

This sequence belongs to the dethiobiotin synthetase family. In terms of assembly, homodimer. Mg(2+) serves as cofactor.

Its subcellular location is the cytoplasm. It catalyses the reaction (7R,8S)-7,8-diammoniononanoate + CO2 + ATP = (4R,5S)-dethiobiotin + ADP + phosphate + 3 H(+). The protein operates within cofactor biosynthesis; biotin biosynthesis; biotin from 7,8-diaminononanoate: step 1/2. Catalyzes a mechanistically unusual reaction, the ATP-dependent insertion of CO2 between the N7 and N8 nitrogen atoms of 7,8-diaminopelargonic acid (DAPA, also called 7,8-diammoniononanoate) to form a ureido ring. This Parafrankia sp. (strain EAN1pec) protein is ATP-dependent dethiobiotin synthetase BioD.